Here is a 468-residue protein sequence, read N- to C-terminus: Beta-amylase (468 aa).

The signal sequence occupies residues 1–36 (MTLYRSLWKKGCMLLLSLVLSLTAFIGSPSNTASAA). Asp-76 provides a ligand contact to substrate. Residues Glu-83 and Asp-87 each coordinate Ca(2+). Residues His-116 and Asp-124 each contribute to the substrate site. Cys-118 and Cys-126 form a disulfide bridge. Glu-170 contributes to the Ca(2+) binding site. Glu-198 functions as the Proton donor in the catalytic mechanism. Lys-314, His-319, and Thr-357 together coordinate substrate. The Proton acceptor role is filled by Glu-394. Substrate is bound by residues 395 to 396 (NA) and Arg-423.

It belongs to the glycosyl hydrolase 14 family. Ca(2+) serves as cofactor.

The catalysed reaction is Hydrolysis of (1-&gt;4)-alpha-D-glucosidic linkages in polysaccharides so as to remove successive maltose units from the non-reducing ends of the chains.. This chain is Beta-amylase, found in Cytobacillus firmus (Bacillus firmus).